The following is a 489-amino-acid chain: Oxysterol-binding protein-related protein 1B (489 aa).

The protein belongs to the OSBP family. In terms of tissue distribution, expressed at low levels in flowers.

Functionally, may be involved in the transport of sterols. The protein is Oxysterol-binding protein-related protein 1B (ORP1B) of Arabidopsis thaliana (Mouse-ear cress).